The sequence spans 218 residues: MALVPYEETTEFGLQKFHKPLATFSFANHTIQIRQDWRHLGVAAVVWDAAIVLSTYLEMGAVELRGRSAVELGAGTGLVGIVAALLGAHVTITDRKVALEFLKSNVQANLPPHIQTKTVVKELTWGQNLGSFSPGEFDLILGADIIYLEETFTDLLQTLEHLCSNHSVILLACRIRYERDNNFLAMLERQFTVRKVHYDPEKDVHIYEAQKRNQKEDL.

Residues Trp-47, 73 to 75 (GAG), Asp-94, Trp-125, and Ala-143 contribute to the S-adenosyl-L-methionine site.

Belongs to the methyltransferase superfamily. METTL21 family. As to quaternary structure, interacts with heat shock protein 70 family members; at least some of these proteins are methylation substrates.

The protein localises to the cytoplasm. It catalyses the reaction L-lysyl-[protein] + 3 S-adenosyl-L-methionine = N(6),N(6),N(6)-trimethyl-L-lysyl-[protein] + 3 S-adenosyl-L-homocysteine + 3 H(+). Functionally, protein-lysine methyltransferase that selectively trimethylates residues in heat shock protein 70 (HSP70) family members. Contributes to the in vivo trimethylation of Lys residues in HSPA1 and HSPA8. In vitro methylates 'Lys-561' in HSPA1, 'Lys-564' in HSPA2, 'Lys-585' in HSPA5, 'Lys-563' in HSPA6 and 'Lys-561' in HSPA8. The sequence is that of Protein N-lysine methyltransferase METTL21A (METTL21A) from Homo sapiens (Human).